The sequence spans 1069 residues: Kinesin-like protein vab-8 (1069 aa).

The region spanning 15–325 (PLRTIPKLRL…ACKIARTRVK (311 aa)) is the Kinesin motor domain. Disordered stretches follow at residues 328-374 (MGHG…LESG), 391-436 (SRTT…KSSP), and 572-598 (EQEEESMRTSTATTGGSKKDHPLRILS). Interaction with unc-51 regions lie at residues 331-517 (GRKP…KSKY) and 517-719 (YNLD…TVVD). Composition is skewed to low complexity over residues 339–364 (SSGTMDSNGSSSSFGTTTITPGGTPR) and 391–407 (SRTTSPASTTMPSTPTS). Residues 403–877 (STPTSIRPLH…SAERDRKTSK (475 aa)) form an interaction with unc-73 region. Positions 719–769 (DWSQIERKKEREKDAMEEEKRKEVLRERRAKLKITELEIKRERNMIDKELD) form a coiled coil. The disordered stretch occupies residues 786–960 (SLSPCRGGRT…RQSYSASSGY (175 aa)). Low complexity predominate over residues 824 to 847 (GGSLAKLSASGASGSGPPSSPSLG). Positions 883-897 (SSKERRSSGSKEELQ) are enriched in basic and acidic residues. Positions 906-928 (TSPKTYGGPGTSSSGRGSSAPGS) are enriched in low complexity. Residues 938-960 (TEKTANGTMPRSKRQSYSASSGY) show a composition bias toward polar residues. Positions 990–1027 (LVRQADEIRHRQWQLKKELEEAKRAIGQEEDAKMIANS) form a coiled coil.

Belongs to the TRAFAC class myosin-kinesin ATPase superfamily. Kinesin family. KIF26 subfamily. As to quaternary structure, interacts with unc-51 and unc-73. Phosphorylated by unc-51.

It localises to the cytoplasm. It is found in the cytoskeleton. Required for posterior migration of cells and axon growth cones during nervous system assembly. In PLM neuron, regulates innexin unc-9 gap junction turnover by suppressing unc-9 transport out of the gap junctions. In Caenorhabditis briggsae, this protein is Kinesin-like protein vab-8 (vab-8).